A 192-amino-acid polypeptide reads, in one-letter code: Outer-membrane lipoprotein LolB (192 aa).

Positions 1–17 (MTYRTLCILAFTALISA) are cleaved as a signal peptide. The N-palmitoyl cysteine moiety is linked to residue cysteine 18. The S-diacylglycerol cysteine moiety is linked to residue cysteine 18.

Belongs to the LolB family. In terms of assembly, monomer.

The protein localises to the cell outer membrane. Functionally, plays a critical role in the incorporation of lipoproteins in the outer membrane after they are released by the LolA protein. This chain is Outer-membrane lipoprotein LolB, found in Marinomonas sp. (strain MWYL1).